The primary structure comprises 156 residues: Riboflavin synthase (156 aa).

The protein belongs to the DMRL synthase family.

The enzyme catalyses 2 6,7-dimethyl-8-(1-D-ribityl)lumazine + H(+) = 5-amino-6-(D-ribitylamino)uracil + riboflavin. It functions in the pathway cofactor biosynthesis; riboflavin biosynthesis; riboflavin from 2-hydroxy-3-oxobutyl phosphate and 5-amino-6-(D-ribitylamino)uracil: step 2/2. The protein is Riboflavin synthase (ribC) of Methanocaldococcus jannaschii (strain ATCC 43067 / DSM 2661 / JAL-1 / JCM 10045 / NBRC 100440) (Methanococcus jannaschii).